The following is a 210-amino-acid chain: Superoxide dismutase [Mn], mitochondrial (210 aa).

4 residues coordinate Mn(2+): His29, His77, Asp163, and His167.

The protein belongs to the iron/manganese superoxide dismutase family. As to quaternary structure, homotetramer. Mn(2+) serves as cofactor.

The protein localises to the mitochondrion matrix. It carries out the reaction 2 superoxide + 2 H(+) = H2O2 + O2. In terms of biological role, destroys superoxide anion radicals which are normally produced within the cells and which are toxic to biological systems. The polypeptide is Superoxide dismutase [Mn], mitochondrial (sodB) (Aspergillus fumigatus (strain ATCC MYA-4609 / CBS 101355 / FGSC A1100 / Af293) (Neosartorya fumigata)).